A 439-amino-acid polypeptide reads, in one-letter code: Serine/threonine-protein kinase 2 (439 aa).

The region spanning 87–439 (NDDFYHISTG…IFSDWINGGN (353 aa)) is the Protein kinase domain. Residues 93–101 (ISTGGYGIV) and lysine 117 each bind ATP. Aspartate 307 serves as the catalytic Proton acceptor.

The protein belongs to the protein kinase superfamily. Ser/Thr protein kinase family. Poxviruses subfamily. Phosphorylated in vivo. Autophosphorylated in vitro.

Its subcellular location is the host endoplasmic reticulum. The protein localises to the host endoplasmic reticulum-Golgi intermediate compartment. It carries out the reaction L-seryl-[protein] + ATP = O-phospho-L-seryl-[protein] + ADP + H(+). The enzyme catalyses L-threonyl-[protein] + ATP = O-phospho-L-threonyl-[protein] + ADP + H(+). Its function is as follows. Essential serine-protein kinase involved in the early stage of virion morphogenesis. This is Serine/threonine-protein kinase 2 (OPG054) from Vaccinia virus (strain Ankara) (VACV).